Here is a 292-residue protein sequence, read N- to C-terminus: uncharacterized protein (292 aa).

The signal sequence occupies residues 1-21; sequence MNSNSNKKRDPARFPAGVAQG. Residues 1-30 are disordered; sequence MNSNSNKKRDPARFPAGVAQGCSTTRAGDL.

This is an uncharacterized protein from Treponema pallidum (strain Nichols).